The sequence spans 131 residues: Profilin-4 (131 aa).

A disulfide bond links Cys13 and Cys115. Positions 81–97 match the Involved in PIP2 interaction motif; it reads VVIRGKKGTGGITIKKT. Thr111 carries the phosphothreonine modification.

It belongs to the profilin family. As to quaternary structure, occurs in many kinds of cells as a complex with monomeric actin in a 1:1 ratio. In terms of processing, phosphorylated by MAP kinases. Expressed predominantly in endosperm but is also found at low levels in all tissues examined, including mature and germinated pollen.

The protein localises to the cytoplasm. It localises to the cytoskeleton. Binds to actin and affects the structure of the cytoskeleton. At high concentrations, profilin prevents the polymerization of actin, whereas it enhances it at low concentrations. By binding to PIP2, it inhibits the formation of IP3 and DG. Has a high affinity for poly-proline. The polypeptide is Profilin-4 (PRO4) (Zea mays (Maize)).